A 153-amino-acid polypeptide reads, in one-letter code: MKTFSQKPAEVTKKWVLIDAEGLVVGRLATIVANRLRGKHKPTFTPHVDDGDNVIIINADKVVFTGKKYQDKTYYWHTGYAGGIKERTARQILEGRFPERVVEKAVERMIPRGPLGRRQMKNLRVYAGSEHPHSAQNPEKVDIAALNKKNARG.

The protein belongs to the universal ribosomal protein uL13 family. In terms of assembly, part of the 50S ribosomal subunit.

In terms of biological role, this protein is one of the early assembly proteins of the 50S ribosomal subunit, although it is not seen to bind rRNA by itself. It is important during the early stages of 50S assembly. The sequence is that of Large ribosomal subunit protein uL13 from Chelativorans sp. (strain BNC1).